We begin with the raw amino-acid sequence, 2014 residues long: AP-1 accessory protein LAA1 (2014 aa).

In terms of assembly, interacts with the clathrin-associated adapter complex AP-1. Interacts directly with LAA2.

The protein resides in the golgi apparatus. It is found in the cytoplasmic vesicle. Its subcellular location is the clathrin-coated vesicle. Involved in localization of clathrin adapter protein complex-1 (AP-1) and subsequent AP-1-mediated clathrin-coated vesicle cargo loading. In complex with LAA2, cooperates with the small GTPase ARF1 and the phosphatidyl-inositol-4-phosphate (PI4P) synthesis to confer temporal specificity to AP-1 recruitment. The chain is AP-1 accessory protein LAA1 from Saccharomyces cerevisiae (strain ATCC 204508 / S288c) (Baker's yeast).